Reading from the N-terminus, the 334-residue chain is Ribosomal RNA small subunit methyltransferase H (334 aa).

S-adenosyl-L-methionine is bound by residues 53–55 (GGH), Asp-72, Phe-99, Asp-122, and His-129.

The protein belongs to the methyltransferase superfamily. RsmH family.

It is found in the cytoplasm. It carries out the reaction cytidine(1402) in 16S rRNA + S-adenosyl-L-methionine = N(4)-methylcytidine(1402) in 16S rRNA + S-adenosyl-L-homocysteine + H(+). Specifically methylates the N4 position of cytidine in position 1402 (C1402) of 16S rRNA. The polypeptide is Ribosomal RNA small subunit methyltransferase H (Leptospira interrogans serogroup Icterohaemorrhagiae serovar Lai (strain 56601)).